A 97-amino-acid polypeptide reads, in one-letter code: MKIRPLHDRVIIKRTEVEAKSAGGIVLTGSAAQKSTRGEVLAVGTGRILDNGEVKALAVKVGDKVIFNEGYGVKTEKLDGQEVLILSETDILAIVEE.

This sequence belongs to the GroES chaperonin family. As to quaternary structure, heptamer of 7 subunits arranged in a ring. Interacts with the chaperonin GroEL.

The protein localises to the cytoplasm. Its function is as follows. Together with the chaperonin GroEL, plays an essential role in assisting protein folding. The GroEL-GroES system forms a nano-cage that allows encapsulation of the non-native substrate proteins and provides a physical environment optimized to promote and accelerate protein folding. GroES binds to the apical surface of the GroEL ring, thereby capping the opening of the GroEL channel. This Tolumonas auensis (strain DSM 9187 / NBRC 110442 / TA 4) protein is Co-chaperonin GroES.